Consider the following 286-residue polypeptide: Bifunctional protein FolD (286 aa).

Residues 165–167 (GRS) and S190 each bind NADP(+).

This sequence belongs to the tetrahydrofolate dehydrogenase/cyclohydrolase family. Homodimer.

It carries out the reaction (6R)-5,10-methylene-5,6,7,8-tetrahydrofolate + NADP(+) = (6R)-5,10-methenyltetrahydrofolate + NADPH. The catalysed reaction is (6R)-5,10-methenyltetrahydrofolate + H2O = (6R)-10-formyltetrahydrofolate + H(+). It participates in one-carbon metabolism; tetrahydrofolate interconversion. Catalyzes the oxidation of 5,10-methylenetetrahydrofolate to 5,10-methenyltetrahydrofolate and then the hydrolysis of 5,10-methenyltetrahydrofolate to 10-formyltetrahydrofolate. This Staphylococcus epidermidis (strain ATCC 35984 / DSM 28319 / BCRC 17069 / CCUG 31568 / BM 3577 / RP62A) protein is Bifunctional protein FolD.